A 595-amino-acid polypeptide reads, in one-letter code: Probable Xaa-Pro aminopeptidase CHGG_02942 (595 aa).

The interval 51 to 76 is disordered; it reads KSGPSSSNLSPSTLSTEKTSSDSSGV. Residues 52-66 are compositionally biased toward low complexity; it reads SGPSSSNLSPSTLST. Mn(2+)-binding residues include D334, D345, E541, and E563.

This sequence belongs to the peptidase M24B family. Mn(2+) serves as cofactor.

The catalysed reaction is Release of any N-terminal amino acid, including proline, that is linked to proline, even from a dipeptide or tripeptide.. In terms of biological role, catalyzes the removal of a penultimate prolyl residue from the N-termini of peptides. In Chaetomium globosum (strain ATCC 6205 / CBS 148.51 / DSM 1962 / NBRC 6347 / NRRL 1970) (Soil fungus), this protein is Probable Xaa-Pro aminopeptidase CHGG_02942.